A 167-amino-acid polypeptide reads, in one-letter code: SsrA-binding protein (167 aa).

Over residues 139–158 the composition is skewed to basic and acidic residues; it reads QNHDKRDAAKERDWQRDKQR. Positions 139-167 are disordered; it reads QNHDKRDAAKERDWQRDKQRVMRRHNRDA.

Belongs to the SmpB family.

Its subcellular location is the cytoplasm. Required for rescue of stalled ribosomes mediated by trans-translation. Binds to transfer-messenger RNA (tmRNA), required for stable association of tmRNA with ribosomes. tmRNA and SmpB together mimic tRNA shape, replacing the anticodon stem-loop with SmpB. tmRNA is encoded by the ssrA gene; the 2 termini fold to resemble tRNA(Ala) and it encodes a 'tag peptide', a short internal open reading frame. During trans-translation Ala-aminoacylated tmRNA acts like a tRNA, entering the A-site of stalled ribosomes, displacing the stalled mRNA. The ribosome then switches to translate the ORF on the tmRNA; the nascent peptide is terminated with the 'tag peptide' encoded by the tmRNA and targeted for degradation. The ribosome is freed to recommence translation, which seems to be the essential function of trans-translation. In Xanthomonas oryzae pv. oryzae (strain PXO99A), this protein is SsrA-binding protein.